We begin with the raw amino-acid sequence, 285 residues long: Flagellar filament 30.7 kDa core protein (285 aa).

This sequence belongs to the bacterial flagellin family. The core of the flagellum consists of several antigenically related polypeptides. In terms of processing, glycosylated. Glycosylation is not essential for motility.

It localises to the periplasmic flagellum. The protein localises to the periplasm. In terms of biological role, component of the core of the flagella. The sequence is that of Flagellar filament 30.7 kDa core protein (flaB3) from Treponema maltophilum.